The primary structure comprises 527 residues: MLLSIKDLSEKYIMLLDVKDLSTLKTTVAVLVTVALIAQVLWKIFFHPLSAFPGPWFNRISEIPGSWVIATGKQHSYYRKLHEKYGPVVRVAPNELSFIGDRAWDDIYGVQKKGPNFEKSPIFIGAVSPLDGQTGISLAPNEAHTRQRRALAHVFSNTALLQQEEIMRSHVDKLVGQLKKTIAENRPINFSNWYTYTTFDMMGDLCFAEPFGCLDQGGATEWSTSVINVFKSAAWDQSIRRVAGVNTWLQKLMVKLLIPSKAANWRKVHFQNSREKTLRRLADGNREHKDFIYHILKNKEAKNSLSETEIILNMVLLISAGTETTASLLTGWTYFICTHPEVYKRLTDEIRGRFNSEQDITWETVKDLPYLHATLSEALRLYSPAPANQQRIVPPGGSVIDGHFVPGKTTVAVAPWAAINSSLNFKDPQKFIPERWLGDERFVNDKLNASQPFSLGPRGCIGKNLSFFEMRLITSRLLWNFDVSLVTTGEHGETNKLWDMDGAGKYMKVYQTWNKPDMWVMLKEVPR.

Residues 26 to 46 form a helical membrane-spanning segment; that stretch reads TTVAVLVTVALIAQVLWKIFF. N189, N420, and N448 each carry an N-linked (GlcNAc...) asparagine glycan. C460 serves as a coordination point for heme. The N-linked (GlcNAc...) asparagine glycan is linked to N464.

Belongs to the cytochrome P450 family. The cofactor is heme.

Its subcellular location is the membrane. Its pathway is hormone biosynthesis. Its function is as follows. Cytochrome P450 monooxygenase; part of the gene cluster that mediates the biosynthesis of abscisic acid (ABA), a phytohormone that acts antagonistically toward salicylic acid (SA), jasmonic acid (JA) and ethylene (ETH) signaling, to impede plant defense responses. The first step of the pathway catalyzes the reaction from farnesyl diphosphate to alpha-ionylideneethane performed by the alpha-ionylideneethane synthase aba3 via a three-step reaction mechanism involving 2 neutral intermediates, beta-farnesene and allofarnesene. The cytochrome P450 monooxygenase aba1 might then be involved in the conversion of alpha-ionylideneethane to alpha-ionylideneacetic acid. Alpha-ionylideneacetic acid is further converted to abscisic acid in 2 steps involving the cytochrome P450 monooxygenase aba2 and the short-chain dehydrogenase/reductase aba4, via the intermediates 1'-deoxy-ABA or 1',4'-trans-diol-ABA, depending on the order of action of these 2 enzymes. Aba2 is responsible for the hydroxylation of carbon atom C-1' and aba4 might be involved in the oxidation of the C-4' carbon atom. This is Cytochrome P450 monooxygenase aba2 (aba2) from Botryotinia fuckeliana (strain B05.10) (Noble rot fungus).